The sequence spans 125 residues: Protein ApaG (125 aa).

The 125-residue stretch at 1–125 folds into the ApaG domain; sequence MINSPRVCIQ…FRLAVPTLIH (125 aa).

This chain is Protein ApaG, found in Citrobacter koseri (strain ATCC BAA-895 / CDC 4225-83 / SGSC4696).